Consider the following 215-residue polypeptide: Ribose-5-phosphate isomerase A (215 aa).

Residues Thr-26–Thr-29, Asp-79–Asp-82, and Lys-92–Gly-95 contribute to the substrate site. Glu-101 serves as the catalytic Proton acceptor. Lys-119 provides a ligand contact to substrate.

Belongs to the ribose 5-phosphate isomerase family. In terms of assembly, homodimer.

The catalysed reaction is aldehydo-D-ribose 5-phosphate = D-ribulose 5-phosphate. It participates in carbohydrate degradation; pentose phosphate pathway; D-ribose 5-phosphate from D-ribulose 5-phosphate (non-oxidative stage): step 1/1. In terms of biological role, catalyzes the reversible conversion of ribose-5-phosphate to ribulose 5-phosphate. This chain is Ribose-5-phosphate isomerase A, found in Xylella fastidiosa (strain M12).